The following is a 183-amino-acid chain: Adenine phosphoribosyltransferase (183 aa).

This sequence belongs to the purine/pyrimidine phosphoribosyltransferase family. Homodimer.

The protein localises to the cytoplasm. The catalysed reaction is AMP + diphosphate = 5-phospho-alpha-D-ribose 1-diphosphate + adenine. Its pathway is purine metabolism; AMP biosynthesis via salvage pathway; AMP from adenine: step 1/1. Functionally, catalyzes a salvage reaction resulting in the formation of AMP, that is energically less costly than de novo synthesis. The chain is Adenine phosphoribosyltransferase from Shewanella halifaxensis (strain HAW-EB4).